Reading from the N-terminus, the 414-residue chain is ZP domain-containing protein (414 aa).

A signal peptide spans 1-17 (MFLYSFVFLMLLGLSSA). The disordered stretch occupies residues 18-65 (QTESATSPDEVETEPTMSTDQPETSPSMSTETEPTTETPPVTTPPPPD). The Extracellular portion of the chain corresponds to 18–364 (QTESATSPDE…GAQEAVSSLT (347 aa)). Residues 39 to 57 (PETSPSMSTETEPTTETPP) are compositionally biased toward low complexity. In terms of domain architecture, ZP spans 70-323 (ICTNEKMEVF…SRCAKGCETS (254 aa)). A disulfide bridge links cysteine 241 with cysteine 302. The helical transmembrane segment at 365-385 (IFAAVAGVLGVIVLFLAVALV) threads the bilayer. At 386 to 414 (MLYKRYRSPQSATRVVYTKTANEEGKLLV) the chain is on the cytoplasmic side.

In terms of tissue distribution, component of the acid-insoluble and acid-soluble organic matrix of the aragonitic skeleton (at protein level).

It localises to the membrane. This chain is ZP domain-containing protein, found in Acropora millepora (Staghorn coral).